The chain runs to 440 residues: SCRYFLAEWGRKEIELAENEMPGLISCRRNMRFKPLRVQIAGCLHMTIQTAVLIETLVELGAEVTWSSCNIFSTQDHAAAAIAASGISVFAWKGETEEEYLWCIETQLTSFKDGKHLNMILDDGGDVTSLVHNKYPDYLKNCKGISEETTTGVHQFYKMLKEGKLKVPAINVNDSVTKSKFDNLYGVSLVLIYKIISNIKLRCRESLIDGIKRATDIMIAAKVAIVAGFGDVGKGCAKALRGMGARVIITEIDPIVALQASMEGYQVAVMEEVADQADIFVTATGCKDIICERHFEAMKNDAIICNIGHFDVEIDVAWLIKKCSSISNIKPQVDRYLLGNGRNIILLAEGRLVNLGCATGHSSMVMSMSFTNQVLAQIALWTAQEGQYPLGVHFLPKKLDEEVARLHLSKLGKLTSLTPEQSAYLDIPIDGPYKSEHYRY.

Residues Thr47, Asp123, and Glu148 each coordinate substrate. 149 to 151 (TTT) contacts NAD(+). Residues Lys178 and Asp182 each coordinate substrate. NAD(+)-binding positions include Asn183, 228–233 (GFGDVG), Glu251, 307–309 (IGH), and Asn354.

The protein belongs to the adenosylhomocysteinase family. The cofactor is NAD(+).

The catalysed reaction is S-adenosyl-L-homocysteine + H2O = L-homocysteine + adenosine. It functions in the pathway amino-acid biosynthesis; L-homocysteine biosynthesis; L-homocysteine from S-adenosyl-L-homocysteine: step 1/1. Its function is as follows. Adenosylhomocysteine is a competitive inhibitor of S-adenosyl-L-methionine-dependent methyl transferase reactions; therefore adenosylhomocysteinase may play a key role in the control of methylations via regulation of the intracellular concentration of adenosylhomocysteine. This chain is Adenosylhomocysteinase (SAHH), found in Pneumocystis carinii.